Reading from the N-terminus, the 233-residue chain is 7-cyano-7-deazaguanine synthase (233 aa).

18 to 28 (FSGGQDSTTCL) serves as a coordination point for ATP. Zn(2+) contacts are provided by C198, C213, C216, and C219.

The protein belongs to the QueC family. Zn(2+) serves as cofactor.

The enzyme catalyses 7-carboxy-7-deazaguanine + NH4(+) + ATP = 7-cyano-7-deazaguanine + ADP + phosphate + H2O + H(+). Its pathway is purine metabolism; 7-cyano-7-deazaguanine biosynthesis. In terms of biological role, catalyzes the ATP-dependent conversion of 7-carboxy-7-deazaguanine (CDG) to 7-cyano-7-deazaguanine (preQ(0)). The protein is 7-cyano-7-deazaguanine synthase of Wolinella succinogenes (strain ATCC 29543 / DSM 1740 / CCUG 13145 / JCM 31913 / LMG 7466 / NCTC 11488 / FDC 602W) (Vibrio succinogenes).